A 337-amino-acid chain; its full sequence is MVREKVRVSTRTLQWKCVESRADSKRLYYGRFILSPLMKGQADTIGIAMRRALLGEIEGTCITRAKFEKIPHEYSTIVGIQESVHEILMNLKEIVLRSNLYGTRNASICVKGPGCVTAQDIILPTSVEIVDNTQYIANLTEPINLCIGLQIERNRGYHIKTPKNFQDGSYPIDAVFMPVRNANHSIHSYGNGNEKQEILFLEIWTNGSLTPKEALHEASRNLIDLFIPFLHAEEENLHLENNQYKVTLPFFTFHDRLAKLRKTKKEIALKSIFIDQFELPPRTYNCLKRYNIHTLFDLLNKSQEDLMKMEYFRIEDVKQILDSLEIEKAFHNPFTEE.

Residues 1–233 (MVREKVRVST…DLFIPFLHAE (233 aa)) are alpha N-terminal domain (alpha-NTD). The segment at 267-337 (IALKSIFIDQ…KAFHNPFTEE (71 aa)) is alpha C-terminal domain (alpha-CTD).

This sequence belongs to the RNA polymerase alpha chain family. In terms of assembly, in plastids the minimal PEP RNA polymerase catalytic core is composed of four subunits: alpha, beta, beta', and beta''. When a (nuclear-encoded) sigma factor is associated with the core the holoenzyme is formed, which can initiate transcription.

The protein resides in the plastid. Its subcellular location is the chloroplast. The enzyme catalyses RNA(n) + a ribonucleoside 5'-triphosphate = RNA(n+1) + diphosphate. In terms of biological role, DNA-dependent RNA polymerase catalyzes the transcription of DNA into RNA using the four ribonucleoside triphosphates as substrates. This chain is DNA-directed RNA polymerase subunit alpha, found in Eucalyptus globulus subsp. globulus (Tasmanian blue gum).